An 87-amino-acid chain; its full sequence is Acyl-CoA-binding protein 2 (87 aa).

Residues 2-87 (VSQLFEEKAK…VDNLIAKYSS (86 aa)) enclose the ACB domain. An acyl-CoA is bound by residues 29–33 (YGLYK), Lys-51, Lys-55, and Tyr-74.

This sequence belongs to the ACBP family.

Functionally, binds medium- and long-chain acyl-CoA esters with very high affinity and may function as an intracellular carrier of acyl-CoA esters. This chain is Acyl-CoA-binding protein 2 (ACB2), found in Saccharomyces pastorianus (strain ATCC 76670 / Carlsberg bottom yeast no.2 / CBS 1503 / CLIB 180 / NBRC 10610 / NRRL Y-1525) (Saaz-type lager yeast).